Consider the following 627-residue polypeptide: ATP-dependent zinc metalloprotease FtsH 2 (627 aa).

The Cytoplasmic segment spans residues 1–7; it reads MKFSWRT. The helical transmembrane segment at 8 to 28 threads the bilayer; it reads ALLWSLPLLVVGFFFWQGSFG. The Lumenal segment spans residues 29 to 117; sequence GADANLGSNT…SHPVRNNGMV (89 aa). Residues 118-138 form a helical membrane-spanning segment; it reads WGFVGNLIFPVLLIASLFFLF. Residues 139-627 lie on the Cytoplasmic side of the membrane; that stretch reads RRSSNMPGGP…PVKEQLIPQL (489 aa). 212 to 219 is a binding site for ATP; the sequence is GPPGTGKT. His433 is a binding site for Zn(2+). Glu434 is a catalytic residue. Zn(2+)-binding residues include His437 and Asp511.

In the central section; belongs to the AAA ATPase family. It in the C-terminal section; belongs to the peptidase M41 family. In terms of assembly, homohexamer (Potential). Part of a large (&gt;500 kDa) complex that includes FtsH3 and PSII. Coimmunoprecipitates with YidC. Zn(2+) is required as a cofactor.

It localises to the cellular thylakoid membrane. In terms of biological role, acts as a processive, ATP-dependent zinc metallopeptidase for both cytoplasmic and membrane proteins. Plays a role in the quality control of integral membrane proteins. Plays a role in the selective replacement of photosystem II (PSII) protein D1 in the PSII repair cycle following visible-light and UV-B induced damage. If damaged D1 is not removed then new D1 cannot be inserted to restore the PSII reaction center. Seems to also degrade damaged and/or unassembled PSII proteins D2 and PsbB (CP47). May recognize D1 via its first 20 amino acids, as deletion of these prevents the PSII repair cycle. Also seems to degrade cytoplasmic GGPS, glucosylglycerol-phosphate synthase. This chain is ATP-dependent zinc metalloprotease FtsH 2 (ftsH2), found in Synechocystis sp. (strain ATCC 27184 / PCC 6803 / Kazusa).